The primary structure comprises 527 residues: Peptide chain release factor 3 (527 aa).

A tr-type G domain is found at 9 to 277 (AKRRTFAIIS…CIVDWAPQPL (269 aa)). Residues 18 to 25 (SHPDAGKT), 86 to 90 (DTPGH), and 140 to 143 (NKLD) contribute to the GTP site.

This sequence belongs to the TRAFAC class translation factor GTPase superfamily. Classic translation factor GTPase family. PrfC subfamily.

The protein localises to the cytoplasm. Its function is as follows. Increases the formation of ribosomal termination complexes and stimulates activities of RF-1 and RF-2. It binds guanine nucleotides and has strong preference for UGA stop codons. It may interact directly with the ribosome. The stimulation of RF-1 and RF-2 is significantly reduced by GTP and GDP, but not by GMP. This chain is Peptide chain release factor 3, found in Pseudomonas paraeruginosa (strain DSM 24068 / PA7) (Pseudomonas aeruginosa (strain PA7)).